The primary structure comprises 450 residues: Grayanic acid biosynthesis cluster O-methyltransferase (450 aa).

Asp254 is an S-adenosyl-L-methionine binding site. The active-site Proton acceptor is the His301.

Belongs to the class I-like SAM-binding methyltransferase superfamily. Cation-independent O-methyltransferase family. COMT subfamily.

Its pathway is secondary metabolite biosynthesis. In terms of biological role, non-reducing polyketide synthase; part of the gene cluster that mediates the biosynthesis of orcinol depsidone grayanic acid (GRA), the only major secondary metabolite known in C.grayi. The first step consists in the ring and depside synthesis by PKS16 leading to 4-O-demethylsphaerophorin, involving different orcinol-like rings, one with acetyl CoA and the other with octanoyl CoA as the starter. Further depsidone formation by the GRA cluster-specific cytochrome P450 leads to 4-O-demethylgrayanic acid. Finally, the cluster specific O-methyltransferase probably converts the 4-O-demethylgrayanic acid into grayanic acid. This Cladonia grayi (Gray's cup lichen) protein is Grayanic acid biosynthesis cluster O-methyltransferase.